Here is a 277-residue protein sequence, read N- to C-terminus: Raffinose operon transcriptional regulatory protein RafR (277 aa).

An HTH araC/xylS-type domain is found at 176 to 274 (NLAVSYLQEN…GASPSYYRKS (99 aa)). DNA-binding regions (H-T-H motif) lie at residues 193-214 (MDLCHYLNLSRSYLYTLFKTHA) and 241-264 (VQSIANMVGYKDSFTFSKAFKRYS).

Functionally, involved in the regulation of the raffinose-operon. The polypeptide is Raffinose operon transcriptional regulatory protein RafR (rafR) (Pediococcus pentosaceus).